The primary structure comprises 473 residues: Ammonium transporter Rh type C (473 aa).

Residues 1-9 (MLRNSNMRW) lie on the Cytoplasmic side of the membrane. A helical transmembrane segment spans residues 10–30 (RLPLICFVWEIAMIVLFGIFV). The Extracellular segment spans residues 31–61 (RYNDEADPHWPIFMKHENITSDIENDFYFRY). An N-linked (GlcNAc...) asparagine glycan is attached at N48. Residues 62–82 (PSFQDVHVMIFVGFGFLMTFL) form a helical membrane-spanning segment. The Cytoplasmic segment spans residues 83–86 (QRYG). The helical transmembrane segment at 87–107 (FGSVAFNFLLAAFGIQWALLM) threads the bilayer. Topologically, residues 108 to 125 (QGWFHTFVNGKILIGVES) are extracellular. A helical membrane pass occupies residues 126–145 (LINADFCVGSVCIAFGGVLG). Over 146 to 151 (KVSPVQ) the chain is Cytoplasmic. Residues 152–171 (IMLMTLFQVTLFAVNEWILL) form a helical membrane-spanning segment. Topologically, residues 172–179 (NKLHVIDA) are extracellular. A helical transmembrane segment spans residues 180–200 (GGSMTIHTFGAYFGLTVAWIL). The Cytoplasmic segment spans residues 201-219 (SRPKLKQNNDKEGSTYISD). Residues 220-240 (LFSMIGTLFLWMYWPSFNSAI) traverse the membrane as a helical segment. Topologically, residues 241–251 (SYHGDAQHRAA) are extracellular. The helical transmembrane segment at 252-272 (INTYCSLAACVLTTVAISSVV) threads the bilayer. Over 273-285 (NKKGKLEMVHIQN) the chain is Cytoplasmic. A helical membrane pass occupies residues 286–306 (ATLAGGVAVGTAAEMMLTPYG). Position 307 (S307) is a topological domain, extracellular. A helical transmembrane segment spans residues 308-328 (LIVGFICGIVSTLGFTYLSPI). At 329–343 (LSNKLRLHDTCGIHN) the chain is on the cytoplasmic side. A helical transmembrane segment spans residues 344 to 364 (LHAIPGLIGGIVGAVTAACAT). At 365–396 (EGVYTAEGLKKMFHFEGEYADRTPSIQGIYQA) the chain is on the extracellular side. The helical transmembrane segment at 397 to 417 (AGIGVSLAFGIVGGTVVGCIL) threads the bilayer. Over 418–473 (KLPIWGDPSDENCFDDDVYWELREEDEEEHLGAANQYITHLPENFKLPDRTEISFK) the chain is Cytoplasmic.

The protein belongs to the ammonium transporter (TC 2.A.49) family. Rh subfamily. Homotrimer.

Its subcellular location is the apical cell membrane. In terms of biological role, functions as an ammonia transporter. The chain is Ammonium transporter Rh type C (rhcg) from Xenopus laevis (African clawed frog).